A 578-amino-acid polypeptide reads, in one-letter code: Glycosyltransferase family 92 protein RCOM_0530710 (578 aa).

A helical membrane pass occupies residues 21-43 (SFFSVRSLTACLSFFVFLLFISS). Positions 295-531 (YELCACTMLW…QNQGSKDRAP (237 aa)) constitute a GT92 domain.

This sequence belongs to the glycosyltransferase 92 family.

It localises to the membrane. In Ricinus communis (Castor bean), this protein is Glycosyltransferase family 92 protein RCOM_0530710.